Reading from the N-terminus, the 61-residue chain is [Thr6, Val10, Asp11]-phyllokinin (61 aa).

The signal sequence occupies residues 1-22 (MSFLKKSLFLVLFLGLVSFSIC). The propeptide occupies 23 to 50 (EEEKRETEEEENEDEMNEESEEKRESPE). The interval 24 to 61 (EEKRETEEEENEDEMNEESEEKRESPERPPGFTPFRVD) is disordered. The segment covering 30-42 (EEEENEDEMNEES) has biased composition (acidic residues).

It belongs to the frog skin active peptide (FSAP) family. Bradykinin-related peptide subfamily. Expressed by the skin glands.

It localises to the secreted. In terms of biological role, induces relaxation of rat smooth muscle from tail artery and contraction of that from ileum, urinary bladder and uterus. Binds to both bradykinin receptor B1 (BDKRB1) and B2 (BDKRB2). In Agalychnis spurrelli (Gliding leaf frog), this protein is [Thr6, Val10, Asp11]-phyllokinin.